We begin with the raw amino-acid sequence, 77 residues long: uncharacterized protein (77 aa).

Residues 13-67 form the HTH cro/C1-type domain; the sequence is VLQYMVNNDYSLNQLALEIGVSPATLSRVLNGERRPGQLVIGKMLHYFNLKFEDL. Positions 24-43 form a DNA-binding region, H-T-H motif; it reads LNQLALEIGVSPATLSRVLN.

The protein localises to the cytoplasm. This is an uncharacterized protein from Bacillus subtilis (strain 168).